The sequence spans 407 residues: Elongation factor Tu (407 aa).

Residues 10–217 enclose the tr-type G domain; sequence KPHVNVGTIG…ALDSYIPEPE (208 aa). Residues 19 to 26 form a G1 region; that stretch reads GHVDHGKT. Residue 19–26 coordinates GTP; it reads GHVDHGKT. Mg(2+) is bound at residue threonine 26. A G2 region spans residues 60–64; that stretch reads GITIA. The interval 81–84 is G3; it reads DCPG. Residues 81–85 and 136–139 each bind GTP; these read DCPGH and NKAD. A G4 region spans residues 136-139; it reads NKAD. The tract at residues 184–186 is G5; that stretch reads SAL.

It belongs to the TRAFAC class translation factor GTPase superfamily. Classic translation factor GTPase family. EF-Tu/EF-1A subfamily. In terms of assembly, monomer.

It localises to the cytoplasm. It catalyses the reaction GTP + H2O = GDP + phosphate + H(+). Its function is as follows. GTP hydrolase that promotes the GTP-dependent binding of aminoacyl-tRNA to the A-site of ribosomes during protein biosynthesis. The chain is Elongation factor Tu from Saccharophagus degradans (strain 2-40 / ATCC 43961 / DSM 17024).